A 390-amino-acid chain; its full sequence is 8-amino-7-oxononanoate synthase (390 aa).

Residue Arg-19 participates in substrate binding. Residue 106–107 (GY) coordinates pyridoxal 5'-phosphate. His-131 serves as a coordination point for substrate. Residues Ser-176, His-204, and Thr-233 each coordinate pyridoxal 5'-phosphate. Lys-236 carries the N6-(pyridoxal phosphate)lysine modification. Thr-350 contacts substrate.

This sequence belongs to the class-II pyridoxal-phosphate-dependent aminotransferase family. BioF subfamily. As to quaternary structure, homodimer. Pyridoxal 5'-phosphate is required as a cofactor.

The catalysed reaction is 6-carboxyhexanoyl-[ACP] + L-alanine + H(+) = (8S)-8-amino-7-oxononanoate + holo-[ACP] + CO2. It functions in the pathway cofactor biosynthesis; biotin biosynthesis. In terms of biological role, catalyzes the decarboxylative condensation of pimeloyl-[acyl-carrier protein] and L-alanine to produce 8-amino-7-oxononanoate (AON), [acyl-carrier protein], and carbon dioxide. The protein is 8-amino-7-oxononanoate synthase of Pseudomonas putida (strain GB-1).